Consider the following 211-residue polypeptide: Protein-L-isoaspartate O-methyltransferase (211 aa).

S62 is a catalytic residue.

This sequence belongs to the methyltransferase superfamily. L-isoaspartyl/D-aspartyl protein methyltransferase family.

The protein localises to the cytoplasm. It carries out the reaction [protein]-L-isoaspartate + S-adenosyl-L-methionine = [protein]-L-isoaspartate alpha-methyl ester + S-adenosyl-L-homocysteine. In terms of biological role, catalyzes the methyl esterification of L-isoaspartyl residues in peptides and proteins that result from spontaneous decomposition of normal L-aspartyl and L-asparaginyl residues. It plays a role in the repair and/or degradation of damaged proteins. The chain is Protein-L-isoaspartate O-methyltransferase from Shewanella sp. (strain MR-4).